We begin with the raw amino-acid sequence, 304 residues long: Non-specific ribonucleoside hydrolase RihC (304 aa).

H233 is a catalytic residue.

This sequence belongs to the IUNH family. RihC subfamily.

In terms of biological role, hydrolyzes both purine and pyrimidine ribonucleosides with a broad-substrate specificity. The sequence is that of Non-specific ribonucleoside hydrolase RihC from Shigella flexneri serotype 5b (strain 8401).